Consider the following 319-residue polypeptide: Fructokinase (319 aa).

It belongs to the carbohydrate kinase PfkB family. As to expression, expressed in swelling stolons and, at higher levels, in developing tubers. Low levels found in leaves and stems from tuberizing plants.

The catalysed reaction is D-fructose + ATP = D-fructose 6-phosphate + ADP + H(+). It functions in the pathway glycan biosynthesis; starch biosynthesis. In terms of biological role, may play an important role in maintaining the flux of carbon towards starch formation. The protein is Fructokinase of Solanum tuberosum (Potato).